The chain runs to 308 residues: Elongation factor Ts (308 aa).

An involved in Mg(2+) ion dislocation from EF-Tu region spans residues 80-83 (TDFV).

Belongs to the EF-Ts family.

It localises to the cytoplasm. Associates with the EF-Tu.GDP complex and induces the exchange of GDP to GTP. It remains bound to the aminoacyl-tRNA.EF-Tu.GTP complex up to the GTP hydrolysis stage on the ribosome. This chain is Elongation factor Ts, found in Methylobacterium radiotolerans (strain ATCC 27329 / DSM 1819 / JCM 2831 / NBRC 15690 / NCIMB 10815 / 0-1).